A 258-amino-acid chain; its full sequence is Thrombin-like enzyme ancrod-2 (258 aa).

An N-terminal signal peptide occupies residues 1 to 18; that stretch reads MVLIRVLANLVILQLSYA. The propeptide occupies 19-24; that stretch reads QKSSEL. The Peptidase S1 domain maps to 25-251; it reads VIGGDECNIN…HLHWILSIMA (227 aa). 6 disulfides stabilise this stretch: Cys31-Cys165, Cys52-Cys68, Cys102-Cys256, Cys144-Cys212, Cys176-Cys191, and Cys202-Cys227. Residues His67 and Asp112 each act as charge relay system in the active site. Residues Asn123 and Asn172 are each glycosylated (N-linked (GlcNAc...) asparagine). Ser206 (charge relay system) is an active-site residue. Residue Asn253 is glycosylated (N-linked (GlcNAc...) asparagine).

This sequence belongs to the peptidase S1 family. Snake venom subfamily. As to quaternary structure, monomer. In terms of tissue distribution, expressed by the venom gland.

The protein localises to the secreted. It catalyses the reaction Selective cleavage of Arg-|-Xaa bond in fibrinogen, to form fibrin, and release fibrinopeptide A. The specificity of further degradation of fibrinogen varies with species origin of the enzyme.. Its function is as follows. Thrombin-like snake venom serine protease. Cleaves fibrinogen (FGA) to split of fibrinopeptides AM, AO, and AY; the aberrant fibrinogen is then incapable of being cross-linked, forming easily dispersible clots. This chain is Thrombin-like enzyme ancrod-2, found in Calloselasma rhodostoma (Malayan pit viper).